Reading from the N-terminus, the 180-residue chain is Chromosome-anchoring protein RacA (180 aa).

The H-T-H motif DNA-binding region spans 5–25 (TPFIAKKLGVSPKAVVRIAQQ). A coiled-coil region spans residues 67-151 (KASSNEVEEL…LEAALTKEEP (85 aa)).

This sequence belongs to the RacA family.

The protein resides in the cytoplasm. Functionally, required for the formation of axial filaments and for anchoring the origin regions at the cell poles in sporulating cells, thus ensuring proper chromosome segregation in the prespore. Binds in a dispersed manner throughout the chromosome but preferentially to sites clustered in the origin portion of the chromosome, causing condensation of the chromosome and its remodeling into an elongated, anchored structure. This Bacillus cereus (strain B4264) protein is Chromosome-anchoring protein RacA.